The sequence spans 287 residues: MARSRGERTPAARRITSRNARFQQWQALLGNRNKRTRAGEFLVMGVRPISLAVEHGWPVRTLLYDGQRELSKWARELLRTVRTEQIAMAPDLLMELGEKNEAPPEVVAVVEMPADDLDRIPVREDFLGVLFDRPTSPGNIGSIIRSADALGAHGLIVAGHAADVYDPKSVRSSTGSLFSLPAVRVPSPGEVMDWVEARRAAGTPIVLVGTDEHGDCDVFDFDFTQPTLLLIGNETAGLSNAWRTLCDYTVSIPMAGSASSLNAANAATAILYEAVRQRISGRTATTP.

S-adenosyl-L-methionine-binding positions include 210-211 (TD), G232, and 252-254 (IPM).

Belongs to the class IV-like SAM-binding methyltransferase superfamily. RNA methyltransferase TsnR/AvirB family. As to quaternary structure, homodimer.

The catalysed reaction is uridine(2479) in 23S rRNA + S-adenosyl-L-methionine = 2'-O-methyluridine(2479) in 23S rRNA + S-adenosyl-L-homocysteine + H(+). Its function is as follows. Specifically methylates the 2'-O-ribose position of uridine-2479 in 23S ribosomal RNA. Confers resistance to antibiotic avilamycin, an orthosomycin antibiotic. This Streptomyces viridochromogenes protein is 23S rRNA (uridine(2479)-2'-O)-methyltransferase (aviRb).